Consider the following 246-residue polypeptide: UDP-N-acetyl-D-mannosaminuronic acid transferase (246 aa).

Belongs to the glycosyltransferase 26 family.

The catalysed reaction is UDP-N-acetyl-alpha-D-mannosaminouronate + N-acetyl-alpha-D-glucosaminyl-di-trans,octa-cis-undecaprenyl diphosphate = beta-D-ManNAcA-(1-&gt;4)-alpha-D-GlcNAc-di-trans,octa-cis-undecaprenyl diphosphate + UDP + H(+). Its pathway is bacterial outer membrane biogenesis; enterobacterial common antigen biosynthesis. Functionally, catalyzes the synthesis of Und-PP-GlcNAc-ManNAcA (Lipid II), the second lipid-linked intermediate involved in enterobacterial common antigen (ECA) synthesis. The polypeptide is UDP-N-acetyl-D-mannosaminuronic acid transferase (Escherichia coli O157:H7).